The primary structure comprises 428 residues: D-amino acid dehydrogenase (428 aa).

3 to 17 (VVILGSGVVGVASAY) lines the FAD pocket.

The protein belongs to the DadA oxidoreductase family. FAD is required as a cofactor.

The enzyme catalyses a D-alpha-amino acid + A + H2O = a 2-oxocarboxylate + AH2 + NH4(+). It participates in amino-acid degradation; D-alanine degradation; NH(3) and pyruvate from D-alanine: step 1/1. Its function is as follows. Oxidative deamination of D-amino acids. This is D-amino acid dehydrogenase from Burkholderia vietnamiensis (strain G4 / LMG 22486) (Burkholderia cepacia (strain R1808)).